The chain runs to 491 residues: Nucleoside transporter 1.2 (491 aa).

Helical transmembrane passes span 27-47, 82-102, 109-129, 136-156, 173-193, and 209-229; these read FYVY…VNAV, YNLI…LSWF, VRLL…MVVP, AGAV…KSIF, STMM…QIIV, and KIYY…LILL. The span at 261 to 273 shows a compositional bias: basic and acidic residues; it reads HTDEHPTHDKEGR. 2 disordered regions span residues 261 to 280 and 290 to 309; these read HTDE…SGKE and AAAK…PHEV. Residue N274 is glycosylated (N-linked (GlcNAc...) asparagine). A run of 5 helical transmembrane segments spans residues 333-353, 361-381, 395-415, 427-447, and 460-480; these read MFVA…GIAV, WFST…RFSP, WIIV…LLHS, VMEV…LVLG, and FVAG…GTVL.

Belongs to the SLC29A/ENT transporter (TC 2.A.57) family.

The protein localises to the membrane. The enzyme catalyses adenosine(in) + H(+)(in) = adenosine(out) + H(+)(out). The catalysed reaction is uridine(in) + H(+)(in) = uridine(out) + H(+)(out). Its function is as follows. Sodium-independent nucleoside:H(+) symporter; transports adenosine with high affinity and uridine with moderate affinity. Can transport cytidine and thymidine. In Leishmania donovani, this protein is Nucleoside transporter 1.2.